Here is a 218-residue protein sequence, read N- to C-terminus: Ribose-5-phosphate isomerase A (218 aa).

Substrate-binding positions include 28 to 31, 81 to 84, and 94 to 97; these read TGST, DGAD, and KGGG. Catalysis depends on Glu103, which acts as the Proton acceptor. Lys121 contributes to the substrate binding site.

This sequence belongs to the ribose 5-phosphate isomerase family. As to quaternary structure, homodimer.

It carries out the reaction aldehydo-D-ribose 5-phosphate = D-ribulose 5-phosphate. The protein operates within carbohydrate degradation; pentose phosphate pathway; D-ribose 5-phosphate from D-ribulose 5-phosphate (non-oxidative stage): step 1/1. Catalyzes the reversible conversion of ribose-5-phosphate to ribulose 5-phosphate. The sequence is that of Ribose-5-phosphate isomerase A from Vibrio atlanticus (strain LGP32) (Vibrio splendidus (strain Mel32)).